Reading from the N-terminus, the 219-residue chain is Orotate phosphoribosyltransferase (219 aa).

A 5-phospho-alpha-D-ribose 1-diphosphate-binding site is contributed by Lys26. Residue 34 to 35 (FF) coordinates orotate. 5-phospho-alpha-D-ribose 1-diphosphate contacts are provided by residues 72–73 (YK), Arg98, Lys99, Lys102, His104, and 124–132 (DDVITAGTA). Orotate-binding residues include Thr128 and Arg156.

Belongs to the purine/pyrimidine phosphoribosyltransferase family. PyrE subfamily. In terms of assembly, homodimer. The cofactor is Mg(2+).

It carries out the reaction orotidine 5'-phosphate + diphosphate = orotate + 5-phospho-alpha-D-ribose 1-diphosphate. It participates in pyrimidine metabolism; UMP biosynthesis via de novo pathway; UMP from orotate: step 1/2. In terms of biological role, catalyzes the transfer of a ribosyl phosphate group from 5-phosphoribose 1-diphosphate to orotate, leading to the formation of orotidine monophosphate (OMP). The sequence is that of Orotate phosphoribosyltransferase from Xylella fastidiosa (strain Temecula1 / ATCC 700964).